Here is a 158-residue protein sequence, read N- to C-terminus: Ribosome maturation factor RimP (158 aa).

The protein belongs to the RimP family.

It localises to the cytoplasm. Required for maturation of 30S ribosomal subunits. The chain is Ribosome maturation factor RimP from Pseudomonas putida (strain ATCC 47054 / DSM 6125 / CFBP 8728 / NCIMB 11950 / KT2440).